Consider the following 151-residue polypeptide: Ribosome maturation factor RimP (151 aa).

The protein belongs to the RimP family.

Its subcellular location is the cytoplasm. Its function is as follows. Required for maturation of 30S ribosomal subunits. The chain is Ribosome maturation factor RimP from Caldanaerobacter subterraneus subsp. tengcongensis (strain DSM 15242 / JCM 11007 / NBRC 100824 / MB4) (Thermoanaerobacter tengcongensis).